The primary structure comprises 38 residues: Exendin-1 (38 aa).

Residue S32 is glycosylated (O-linked (HexNAc...) serine; in Exendin-1 and Exendin-1b).

Belongs to the glucagon family. O-linked glycan consists of Hex-HexNAc saccharide. In terms of processing, glycosylation may be of interest for the biological stability of exendin-1 and exendin-1b. Expressed by the venom gland.

Its subcellular location is the secreted. O-linked and free exendin-1 and exendin-1b have vasoactive intestinal peptide(VIP)/secretin-like biological activities. They interact with rat and human VIP receptors 1 (VIPR1) and 2 (VIPR2), with the highest affinity for the human VIPR2. They induce hypotension that is mediated by relaxation of cardiac smooth muscle. The sequence is that of Exendin-1 from Heloderma horridum horridum (Mexican beaded lizard).